Here is a 912-residue protein sequence, read N- to C-terminus: E3 ubiquitin-protein ligase HACE1 (912 aa).

ANK repeat units lie at residues 23-55 (LPED…NSKF), 64-93 (VKRS…DPNY), 97-126 (SGCT…DVNI), 130-159 (EGLT…NVDV), 163-192 (MGQT…DINR), 196-226 (SGAT…YLPD), and 228-253 (NGVT…QHHP). The 336-residue stretch at 577-912 (NCEKLKQGIA…HCGSYGYTMA (336 aa)) folds into the HECT domain. The Glycyl thioester intermediate role is filled by Cys-879.

The protein resides in the golgi apparatus. It is found in the golgi stack membrane. It localises to the cytoplasm. The protein localises to the endoplasmic reticulum. It carries out the reaction S-ubiquitinyl-[E2 ubiquitin-conjugating enzyme]-L-cysteine + [acceptor protein]-L-lysine = [E2 ubiquitin-conjugating enzyme]-L-cysteine + N(6)-ubiquitinyl-[acceptor protein]-L-lysine.. The protein operates within protein modification; protein ubiquitination. Functionally, E3 ubiquitin-protein ligase involved in Golgi membrane fusion and regulation of small GTPases. Acts as a regulator of Golgi membrane dynamics during the cell cycle: recruited to Golgi membrane by Rab proteins and regulates postmitotic Golgi membrane fusion. Acts by mediating ubiquitination during mitotic Golgi disassembly, ubiquitination serving as a signal for Golgi reassembly later, after cell division. This Xenopus tropicalis (Western clawed frog) protein is E3 ubiquitin-protein ligase HACE1 (hace1).